We begin with the raw amino-acid sequence, 485 residues long: Regulatory protein ViaA (485 aa).

The protein belongs to the ViaA family. As to quaternary structure, homodimer. Interacts with RavA.

It localises to the cytoplasm. Component of the RavA-ViaA chaperone complex, which may act on the membrane to optimize the function of some of the respiratory chains. ViaA stimulates the ATPase activity of RavA. This Photorhabdus laumondii subsp. laumondii (strain DSM 15139 / CIP 105565 / TT01) (Photorhabdus luminescens subsp. laumondii) protein is Regulatory protein ViaA.